The chain runs to 379 residues: Queuine tRNA-ribosyltransferase (379 aa).

Residue aspartate 94 is the Proton acceptor of the active site. Substrate contacts are provided by residues 94–98 (DSGGF), aspartate 148, glutamine 191, and glycine 218. Positions 249–255 (GVGSPDS) are RNA binding. Aspartate 268 serves as the catalytic Nucleophile. Residues 273 to 277 (TRIAR) form an RNA binding; important for wobble base 34 recognition region. Residues cysteine 306, cysteine 308, cysteine 311, and histidine 337 each contribute to the Zn(2+) site.

Belongs to the queuine tRNA-ribosyltransferase family. Homodimer. Within each dimer, one monomer is responsible for RNA recognition and catalysis, while the other monomer binds to the replacement base PreQ1. Requires Zn(2+) as cofactor.

The enzyme catalyses 7-aminomethyl-7-carbaguanine + guanosine(34) in tRNA = 7-aminomethyl-7-carbaguanosine(34) in tRNA + guanine. Its pathway is tRNA modification; tRNA-queuosine biosynthesis. Its function is as follows. Catalyzes the base-exchange of a guanine (G) residue with the queuine precursor 7-aminomethyl-7-deazaguanine (PreQ1) at position 34 (anticodon wobble position) in tRNAs with GU(N) anticodons (tRNA-Asp, -Asn, -His and -Tyr). Catalysis occurs through a double-displacement mechanism. The nucleophile active site attacks the C1' of nucleotide 34 to detach the guanine base from the RNA, forming a covalent enzyme-RNA intermediate. The proton acceptor active site deprotonates the incoming PreQ1, allowing a nucleophilic attack on the C1' of the ribose to form the product. After dissociation, two additional enzymatic reactions on the tRNA convert PreQ1 to queuine (Q), resulting in the hypermodified nucleoside queuosine (7-(((4,5-cis-dihydroxy-2-cyclopenten-1-yl)amino)methyl)-7-deazaguanosine). This is Queuine tRNA-ribosyltransferase from Listeria innocua serovar 6a (strain ATCC BAA-680 / CLIP 11262).